Reading from the N-terminus, the 151-residue chain is Regulatory protein RecX (151 aa).

The protein belongs to the RecX family.

It is found in the cytoplasm. In terms of biological role, modulates RecA activity. The sequence is that of Regulatory protein RecX from Haemophilus ducreyi (strain 35000HP / ATCC 700724).